Here is a 445-residue protein sequence, read N- to C-terminus: Clusterin (445 aa).

Positions 1 to 22 are cleaved as a signal peptide; the sequence is MMKTLLLLVGLLLTWDNGRVLG. The short motif at 78–81 is the Nuclear localization signal element; it reads KKKK. 2 N-linked (GlcNAc...) asparagine glycosylation sites follow: asparagine 86 and asparagine 103. 5 cysteine pairs are disulfide-bonded: cysteine 102–cysteine 309, cysteine 113–cysteine 301, cysteine 116–cysteine 298, cysteine 121–cysteine 291, and cysteine 129–cysteine 281. Phosphoserine is present on serine 133. 5 N-linked (GlcNAc...) asparagine glycosylation sites follow: asparagine 145, asparagine 277, asparagine 287, asparagine 350, and asparagine 370. Phosphoserine is present on serine 392. The Nuclear localization signal signature appears at 439–443; sequence RQKHR.

This sequence belongs to the clusterin family. Antiparallel disulfide-linked heterodimer of an alpha chain and a beta chain. Self-associates and forms higher oligomers. Interacts with a broad range of misfolded proteins, including APP, APOC2 and LYZ. Slightly acidic pH promotes interaction with misfolded proteins. Forms high-molecular weight oligomers upon interaction with misfolded proteins. Interacts with APOA1, LRP2, CLUAP1 and PON1. Interacts with the complement membrane attack complex. Interacts (via alpha chain) with XRCC6. Interacts with SYVN1, COMMD1, BTRC, CUL1 and with ubiquitin and SCF (SKP1-CUL1-F-box protein) E3 ubiquitin-protein ligase complexes. Interacts (via alpha chain) with BAX in stressed cells, where BAX undergoes a conformation change leading to association with the mitochondrial membrane. Does not interact with BAX in unstressed cells. Found in a complex with LTF, CLU, EPPIN and SEMG1. Interacts (immaturely glycosylated pre-secreted form) with HSPA5; this interaction promotes CLU stability and facilitates stress-induced CLU retrotranslocation from the secretory pathway to the mitochondria, thereby reducing stress-induced apoptosis by stabilizing mitochondrial membrane integrity. Interacts with BCL2L1; this interaction releases and activates BAX and promotes cell death. Interacts with TGFBR2 and ACVR1. Interacts (secreted form) with STMN3; this interaction may act as an important modulator during neuronal differentiation. Interacts with VLDLR and LRP8. In terms of processing, proteolytically cleaved on its way through the secretory system, probably within the Golgi lumen. Proteolytic cleavage is not necessary for its chaperone activity. All non-secreted forms are not proteolytically cleaved. Chaperone activity of uncleaved forms is dependent on a non-reducing environment. This proteolytic maturation is disulfide bond formation dependent. Post-translationally, polyubiquitinated, leading to proteasomal degradation. Under cellular stress, the intracellular level of cleaved form is reduced due to proteasomal degradation. Heavily N-glycosylated. About 30% of the protein mass is comprised of complex N-linked carbohydrate. Endoplasmic reticulum (ER) stress induces changes in glycosylation status and increases level of hypoglycosylated forms. Core carbohydrates are essential for chaperone activity. Non-secreted forms are hypoglycosylated or unglycosylated.

The protein localises to the secreted. It is found in the nucleus. Its subcellular location is the cytoplasm. It localises to the mitochondrion membrane. The protein resides in the cytosol. The protein localises to the microsome. It is found in the endoplasmic reticulum. Its subcellular location is the mitochondrion. It localises to the perinuclear region. The protein resides in the cytoplasmic vesicle. The protein localises to the secretory vesicle. It is found in the chromaffin granule. Functionally, functions as extracellular chaperone that prevents aggregation of non native proteins. Prevents stress-induced aggregation of blood plasma proteins. Inhibits formation of amyloid fibrils by APP, APOC2, B2M, CALCA, CSN3, SNCA and aggregation-prone LYZ variants (in vitro). Does not require ATP. Maintains partially unfolded proteins in a state appropriate for subsequent refolding by other chaperones, such as HSPA8/HSC70. Does not refold proteins by itself. Binding to cell surface receptors triggers internalization of the chaperone-client complex and subsequent lysosomal or proteasomal degradation. When secreted, protects cells against apoptosis and against cytolysis by complement: inhibits assembly of the complement membrane attack complex (MAC) by preventing polymerization of C9 pore component of the MAC complex. Intracellular forms interact with ubiquitin and SCF (SKP1-CUL1-F-box protein) E3 ubiquitin-protein ligase complexes and promote the ubiquitination and subsequent proteasomal degradation of target proteins. Promotes proteasomal degradation of COMMD1 and IKBKB. Modulates NF-kappa-B transcriptional activity. Following stress, promotes apoptosis. Inhibits apoptosis when associated with the mitochondrial membrane by interference with BAX-dependent release of cytochrome c into the cytoplasm. Plays a role in the regulation of cell proliferation. An intracellular form suppresses stress-induced apoptosis by stabilizing mitochondrial membrane integrity through interaction with HSPA5. Secreted form does not affect caspase or BAX-mediated intrinsic apoptosis and TNF-induced NF-kappa-B-activity. Secreted form act as an important modulator during neuronal differentiation through interaction with STMN3. Plays a role in the clearance of immune complexes that arise during cell injury. This Canis lupus familiaris (Dog) protein is Clusterin (CLU).